Consider the following 320-residue polypeptide: Lipoyl synthase (320 aa).

The [4Fe-4S] cluster site is built by Cys-67, Cys-72, Cys-78, Cys-93, Cys-97, Cys-100, and Ser-307. The Radical SAM core domain occupies 79 to 296 (FNHGTATFMI…RDKANEMGFE (218 aa)).

The protein belongs to the radical SAM superfamily. Lipoyl synthase family. It depends on [4Fe-4S] cluster as a cofactor.

Its subcellular location is the cytoplasm. The enzyme catalyses [[Fe-S] cluster scaffold protein carrying a second [4Fe-4S](2+) cluster] + N(6)-octanoyl-L-lysyl-[protein] + 2 oxidized [2Fe-2S]-[ferredoxin] + 2 S-adenosyl-L-methionine + 4 H(+) = [[Fe-S] cluster scaffold protein] + N(6)-[(R)-dihydrolipoyl]-L-lysyl-[protein] + 4 Fe(3+) + 2 hydrogen sulfide + 2 5'-deoxyadenosine + 2 L-methionine + 2 reduced [2Fe-2S]-[ferredoxin]. The protein operates within protein modification; protein lipoylation via endogenous pathway; protein N(6)-(lipoyl)lysine from octanoyl-[acyl-carrier-protein]: step 2/2. In terms of biological role, catalyzes the radical-mediated insertion of two sulfur atoms into the C-6 and C-8 positions of the octanoyl moiety bound to the lipoyl domains of lipoate-dependent enzymes, thereby converting the octanoylated domains into lipoylated derivatives. In Haemophilus influenzae (strain PittEE), this protein is Lipoyl synthase.